The sequence spans 120 residues: Large ribosomal subunit protein bL19 (120 aa).

Belongs to the bacterial ribosomal protein bL19 family.

This protein is located at the 30S-50S ribosomal subunit interface and may play a role in the structure and function of the aminoacyl-tRNA binding site. This Microcystis aeruginosa (strain NIES-843 / IAM M-2473) protein is Large ribosomal subunit protein bL19.